The primary structure comprises 205 residues: Phosphoheptose isomerase (205 aa).

Positions 38 to 200 (LAVRLALGSK…LFEAVGELEP (163 aa)) constitute an SIS domain. 53 to 55 (NGG) contacts substrate. H62 and E66 together coordinate Zn(2+). Substrate contacts are provided by residues E66, 95–96 (ND), 121–123 (STS), S126, and Q173. Residues Q173 and H181 each contribute to the Zn(2+) site.

It belongs to the SIS family. GmhA subfamily. Homotetramer. It depends on Zn(2+) as a cofactor.

The protein resides in the cytoplasm. It carries out the reaction 2 D-sedoheptulose 7-phosphate = D-glycero-alpha-D-manno-heptose 7-phosphate + D-glycero-beta-D-manno-heptose 7-phosphate. Its pathway is carbohydrate biosynthesis; D-glycero-D-manno-heptose 7-phosphate biosynthesis; D-glycero-alpha-D-manno-heptose 7-phosphate and D-glycero-beta-D-manno-heptose 7-phosphate from sedoheptulose 7-phosphate: step 1/1. In terms of biological role, catalyzes the isomerization of sedoheptulose 7-phosphate in D-glycero-D-manno-heptose 7-phosphate. This Maridesulfovibrio salexigens (strain ATCC 14822 / DSM 2638 / NCIMB 8403 / VKM B-1763) (Desulfovibrio salexigens) protein is Phosphoheptose isomerase.